The chain runs to 151 residues: UPF0178 protein Swoo_1444 (151 aa).

The protein belongs to the UPF0178 family.

This Shewanella woodyi (strain ATCC 51908 / MS32) protein is UPF0178 protein Swoo_1444.